The primary structure comprises 275 residues: Undecaprenyl-diphosphatase 2 (275 aa).

7 helical membrane passes run N48–F68, G90–F110, I117–A137, I154–F174, A195–I215, I223–V243, and I254–F274.

Belongs to the UppP family.

Its subcellular location is the cell membrane. The enzyme catalyses di-trans,octa-cis-undecaprenyl diphosphate + H2O = di-trans,octa-cis-undecaprenyl phosphate + phosphate + H(+). Functionally, catalyzes the dephosphorylation of undecaprenyl diphosphate (UPP). Confers resistance to bacitracin. This Shouchella clausii (strain KSM-K16) (Alkalihalobacillus clausii) protein is Undecaprenyl-diphosphatase 2.